Reading from the N-terminus, the 244-residue chain is MEIVSMRDMLKAGVHFGHQTRYWNPKMKPFIFGSRNKVHIINLEKTLPMFNFALSELKKISLKKGKILFVGTKRAASKKIKETALNCNQFYVNHRWLGGMLTNWKTVRQSIKRLKDLETESQDGTFSKITKKEALIRTRELSKLENSLGGIKNMGGLPDCLFVIDAAHENIAIKEANNLGIPVFAIVDTNSNPDGVDYVIPGNDDAIRSVTLYLQAVSLSICKNQNGNSFSEMLLDSDKKMNIE.

This sequence belongs to the universal ribosomal protein uS2 family.

This is Small ribosomal subunit protein uS2 from Buchnera aphidicola subsp. Schizaphis graminum (strain Sg).